Here is a 412-residue protein sequence, read N- to C-terminus: Short-chain specific acyl-CoA dehydrogenase, mitochondrial (412 aa).

A mitochondrion-targeting transit peptide spans 1–24; that stretch reads MAATLLARACGLVRGAPWPWGWRR. Thr27 is subject to Phosphothreonine. Residue Lys51 is modified to N6-acetyllysine; alternate. Lys51 carries the N6-succinyllysine; alternate modification. Lys72 carries the post-translational modification N6-acetyllysine. Lys129 is subject to N6-acetyllysine; alternate. Lys129 carries the N6-succinyllysine; alternate modification. FAD is bound by residues 152-161 and 185-187; these read FALSEPGNGS and WIT. Residue Ser161 coordinates substrate. An N6-acetyllysine modification is found at Lys208. An N6-acetyllysine; alternate modification is found at Lys262. Position 262 is an N6-succinyllysine; alternate (Lys262). 269 to 272 contacts substrate; the sequence is DTGR. Arg297 serves as a coordination point for FAD. Lys306 carries the N6-acetyllysine; alternate modification. Lys306 is modified (N6-succinyllysine; alternate). Residues Gln308 and 365 to 369 contribute to the FAD site; that span reads QILGG. The Proton acceptor role is filled by Glu392. Residue Gly393 participates in substrate binding. 394 to 396 serves as a coordination point for FAD; sequence TSE.

The protein belongs to the acyl-CoA dehydrogenase family. As to quaternary structure, homotetramer. Requires FAD as cofactor.

It localises to the mitochondrion matrix. The catalysed reaction is a short-chain 2,3-saturated fatty acyl-CoA + oxidized [electron-transfer flavoprotein] + H(+) = a short-chain (2E)-enoyl-CoA + reduced [electron-transfer flavoprotein]. The enzyme catalyses butanoyl-CoA + oxidized [electron-transfer flavoprotein] + H(+) = (2E)-butenoyl-CoA + reduced [electron-transfer flavoprotein]. It catalyses the reaction pentanoyl-CoA + oxidized [electron-transfer flavoprotein] + H(+) = (2E)-pentenoyl-CoA + reduced [electron-transfer flavoprotein]. It carries out the reaction hexanoyl-CoA + oxidized [electron-transfer flavoprotein] + H(+) = (2E)-hexenoyl-CoA + reduced [electron-transfer flavoprotein]. Its pathway is lipid metabolism; mitochondrial fatty acid beta-oxidation. Functionally, short-chain specific acyl-CoA dehydrogenase is one of the acyl-CoA dehydrogenases that catalyze the first step of mitochondrial fatty acid beta-oxidation, an aerobic process breaking down fatty acids into acetyl-CoA and allowing the production of energy from fats. The first step of fatty acid beta-oxidation consists in the removal of one hydrogen from C-2 and C-3 of the straight-chain fatty acyl-CoA thioester, resulting in the formation of trans-2-enoyl-CoA. Among the different mitochondrial acyl-CoA dehydrogenases, short-chain specific acyl-CoA dehydrogenase acts specifically on acyl-CoAs with saturated 4 to 6 carbons long primary chains. The protein is Short-chain specific acyl-CoA dehydrogenase, mitochondrial (ACADS) of Bos taurus (Bovine).